The chain runs to 268 residues: Bis(5'-nucleosyl)-tetraphosphatase, symmetrical (268 aa).

Belongs to the Ap4A hydrolase family.

The catalysed reaction is P(1),P(4)-bis(5'-adenosyl) tetraphosphate + H2O = 2 ADP + 2 H(+). Functionally, hydrolyzes diadenosine 5',5'''-P1,P4-tetraphosphate to yield ADP. The sequence is that of Bis(5'-nucleosyl)-tetraphosphatase, symmetrical from Vibrio parahaemolyticus serotype O3:K6 (strain RIMD 2210633).